A 122-amino-acid chain; its full sequence is Ribosome-binding factor A (122 aa).

This sequence belongs to the RbfA family. In terms of assembly, monomer. Binds 30S ribosomal subunits, but not 50S ribosomal subunits or 70S ribosomes.

It localises to the cytoplasm. Its function is as follows. One of several proteins that assist in the late maturation steps of the functional core of the 30S ribosomal subunit. Associates with free 30S ribosomal subunits (but not with 30S subunits that are part of 70S ribosomes or polysomes). Required for efficient processing of 16S rRNA. May interact with the 5'-terminal helix region of 16S rRNA. The sequence is that of Ribosome-binding factor A from Halothermothrix orenii (strain H 168 / OCM 544 / DSM 9562).